Here is a 309-residue protein sequence, read N- to C-terminus: Protein FdhE homolog (309 aa).

The protein belongs to the FdhE family.

Its subcellular location is the cytoplasm. Necessary for formate dehydrogenase activity. In Klebsiella pneumoniae (strain 342), this protein is Protein FdhE homolog.